Reading from the N-terminus, the 130-residue chain is Small ribosomal subunit protein uS9 (130 aa).

The protein belongs to the universal ribosomal protein uS9 family.

The protein is Small ribosomal subunit protein uS9 of Xanthomonas campestris pv. campestris (strain 8004).